Here is a 677-residue protein sequence, read N- to C-terminus: DNA ligase (677 aa).

Residues 38–42, 87–88, and E121 contribute to the NAD(+) site; these read DYDFD and SL. K123 acts as the N6-AMP-lysine intermediate in catalysis. The NAD(+) site is built by R144, E187, K300, and K324. The Zn(2+) site is built by C418, C421, C436, and C442. The BRCT domain occupies 601-677; the sequence is LINSNFEGLS…ISEEEFEAML (77 aa).

It belongs to the NAD-dependent DNA ligase family. LigA subfamily. It depends on Mg(2+) as a cofactor. Mn(2+) is required as a cofactor.

It carries out the reaction NAD(+) + (deoxyribonucleotide)n-3'-hydroxyl + 5'-phospho-(deoxyribonucleotide)m = (deoxyribonucleotide)n+m + AMP + beta-nicotinamide D-nucleotide.. Its function is as follows. DNA ligase that catalyzes the formation of phosphodiester linkages between 5'-phosphoryl and 3'-hydroxyl groups in double-stranded DNA using NAD as a coenzyme and as the energy source for the reaction. It is essential for DNA replication and repair of damaged DNA. The polypeptide is DNA ligase (Chlorobium luteolum (strain DSM 273 / BCRC 81028 / 2530) (Pelodictyon luteolum)).